Reading from the N-terminus, the 118-residue chain is Large ribosomal subunit protein bL17 (118 aa).

It belongs to the bacterial ribosomal protein bL17 family. As to quaternary structure, part of the 50S ribosomal subunit. Contacts protein L32.

This is Large ribosomal subunit protein bL17 from Onion yellows phytoplasma (strain OY-M).